Reading from the N-terminus, the 565-residue chain is Wee1-like protein kinase 2 (565 aa).

Disordered stretches follow at residues 18–78 (YCEE…KSPE) and 169–191 (KSNG…GNVE). Over residues 19 to 29 (CEEESESEGQE) the composition is skewed to acidic residues. Residues 31-51 (WETRDAHSQIPDRAEGQESEA) show a composition bias toward basic and acidic residues. Ser-76 carries the phosphoserine modification. The short motif at 173–175 (KRK) is the Nuclear localization signal element. One can recognise a Protein kinase domain in the interval 214-492 (FLEVEKIGVG…ARSRVLRPSL (279 aa)). ATP-binding positions include 220 to 228 (IGVGEFGTV) and Lys-243. The Nuclear export signal motif lies at 317 to 331 (KLKDILLQISLGLKY). Catalysis depends on Asp-341, which acts as the Proton acceptor. Mg(2+) is bound by residues Asn-346 and Asp-382. A coiled-coil region spans residues 495 to 521 (AEELQQQLNLEKFKTATLERELREAQQ). Residues 521 to 565 (QAWFSQEERGDAGVSGTPTGSRSTKRLVGGKSAKSSSFTWGKSSP) are disordered. The segment covering 553–565 (AKSSSFTWGKSSP) has biased composition (polar residues).

This sequence belongs to the protein kinase superfamily. Ser/Thr protein kinase family. WEE1 subfamily. Post-translationally, phosphorylation leads to increase its activity.

The protein resides in the nucleus. The catalysed reaction is L-tyrosyl-[protein] + ATP = O-phospho-L-tyrosyl-[protein] + ADP + H(+). Functionally, oocyte-specific protein tyrosine kinase that phosphorylates and inhibits CDK1 and acts as a key regulator of meiosis during both prophase I and metaphase II. Required to maintain meiotic arrest in oocytes during the germinal vesicle (GV) stage, a long period of quiescence at dictyate prophase I, by phosphorylating CDK1 at 'Tyr-15', leading to inhibit CDK1 activity and prevent meiotic reentry. Also required for metaphase II exit during egg activation by phosphorylating CDK1 at 'Tyr-15', to ensure exit from meiosis in oocytes and promote pronuclear formation. This chain is Wee1-like protein kinase 2 (WEE2), found in Ailuropoda melanoleuca (Giant panda).